The sequence spans 279 residues: MAATMADYNDQIVNETSFYNRMVLSHLLPVNLWEPLPHFLQTWLRNYLAGNILYFISGFLWCFYIYYLKLNVYVPKESIPTRKAMLLQIYVAMKAMPWYTLLPAVSEYMIEHGWTKCYSTLDHFNWFLCFLYIALYLVLVEFMIYWVHKELHDIKFLYKHLHATHHMYNKQNTLSPFAGLAFHPLDGILQAIPHVIALFIVPIHLITHLSLLFLEGIWTASIHDCIHGNIWPIMGAGYHTIHHTTYKHNYGHYTIWMDWMFGSLMVPLAEKDSFKEKEK.

Helical transmembrane passes span 48–68 (LAGN…IYYL) and 127–147 (FLCF…IYWV). A Fatty acid hydroxylase domain is found at 134 to 263 (ALYLVLVEFM…TIWMDWMFGS (130 aa)). The Histidine box-1 signature appears at 148-152 (HKELH). Residues 162–166 (HATHH) carry the Histidine box-2 motif. A helical membrane pass occupies residues 194–214 (HVIALFIVPIHLITHLSLLFL). Positions 239-243 (HTIHH) match the Histidine box-3 motif.

Belongs to the sterol desaturase family. Requires Fe cation as cofactor.

The protein resides in the endoplasmic reticulum membrane. The catalysed reaction is a Delta(7)-sterol + 2 Fe(II)-[cytochrome b5] + O2 + 2 H(+) = a Delta(5),Delta(7)-sterol + 2 Fe(III)-[cytochrome b5] + 2 H2O. The protein is Putative Delta(7)-sterol-C5(6)-desaturase 2 (HDF7) of Arabidopsis thaliana (Mouse-ear cress).